We begin with the raw amino-acid sequence, 974 residues long: Mediator of RNA polymerase II transcription subunit 16 (974 aa).

The disordered stretch occupies residues 62 to 92 (ESSSTLSTHSTTTSVNGSTTAGVGSTPNFGG). Low complexity predominate over residues 63–75 (SSSTLSTHSTTTS). A compositionally biased stretch (polar residues) spans 76 to 92 (VNGSTTAGVGSTPNFGG). Positions 889-893 (KLPIK) match the Nuclear localization signal motif.

The protein belongs to the Mediator complex subunit 16 family. Component of the Mediator complex, which is composed of at least 21 subunits that form three structurally distinct submodules. The Mediator head module contains MED6, MED8, MED11, SRB4/MED17, SRB5/MED18, ROX3/MED19, SRB2/MED20 and SRB6/MED22, the middle module contains MED1, MED4, NUT1/MED5, MED7, CSE2/MED9, NUT2/MED10, SRB7/MED21 and SOH1/MED31, and the tail module contains MED2, PGD1/MED3, RGR1/MED14, GAL11/MED15 and SIN4/MED16. The head and the middle modules interact directly with RNA polymerase II, whereas the elongated tail module interacts with gene-specific regulatory proteins. Interacts with HOG1. Post-translationally, phosphorylated by KIN28.

It localises to the nucleus. Component of the Mediator complex, a coactivator involved in the regulated transcription of nearly all RNA polymerase II-dependent genes. Mediator functions as a bridge to convey information from gene-specific regulatory proteins to the basal RNA polymerase II transcription machinery. The Mediator complex, having a compact conformation in its free form, is recruited to promoters by direct interactions with regulatory proteins and serves for the assembly of a functional preinitiation complex with RNA polymerase II and the general transcription factors. The Mediator complex unfolds to an extended conformation and partially surrounds RNA polymerase II, specifically interacting with the unphosphorylated form of the C-terminal domain (CTD) of RNA polymerase II. The Mediator complex dissociates from the RNA polymerase II holoenzyme and stays at the promoter when transcriptional elongation begins. The polypeptide is Mediator of RNA polymerase II transcription subunit 16 (SIN4) (Saccharomyces cerevisiae (strain ATCC 204508 / S288c) (Baker's yeast)).